We begin with the raw amino-acid sequence, 358 residues long: Purine permease 2 (358 aa).

The next 10 helical transmembrane spans lie at 6 to 26 (VLVI…PLMM), 37 to 57 (IWFP…PLLL), 74 to 94 (FFLM…LVGF), 110 to 130 (TASL…FFMV), 134 to 154 (FTPF…VLAL), 170 to 190 (VVGF…LPLV), 209 to 229 (FQMV…LAAG), 262 to 282 (VIVF…GLIF), 288 to 308 (VSGI…VICF), and 312 to 332 (FQAG…SYFY). An EamA domain is found at 46–154 (VGCPLIFFPL…LTGGAVVLAL (109 aa)).

Belongs to the purine permeases (TC 2.A.7.14) family. Expressed in the vascular system of leaves. Restricted to the phloem. Expressed in flowers and roots and not detected in stems.

The protein localises to the membrane. With respect to regulation, competitive inhibition of adenine transport by isopentenyladenine, kinetin, benzylaminopurine, trans- and cis-zeatin and trans-zeatin riboside. Functionally, mediates adenine transport. May be involved in the uptake of cytokinin analogs. This chain is Purine permease 2 (PUP2), found in Arabidopsis thaliana (Mouse-ear cress).